Consider the following 386-residue polypeptide: Succinate--CoA ligase [ADP-forming] subunit beta (386 aa).

The 236-residue stretch at 9–244 folds into the ATP-grasp domain; sequence KAVLRSYGVS…LEEEDSKEIE (236 aa). Residues Lys46, 53–55, Glu99, Cys102, and Glu107 each bind ATP; that span reads GRG. Mg(2+) contacts are provided by Asn199 and Asp213. Substrate is bound by residues Asn264 and 321-323; that span reads GIM.

Belongs to the succinate/malate CoA ligase beta subunit family. Heterotetramer of two alpha and two beta subunits. Mg(2+) is required as a cofactor.

It carries out the reaction succinate + ATP + CoA = succinyl-CoA + ADP + phosphate. The enzyme catalyses GTP + succinate + CoA = succinyl-CoA + GDP + phosphate. It functions in the pathway carbohydrate metabolism; tricarboxylic acid cycle; succinate from succinyl-CoA (ligase route): step 1/1. Its function is as follows. Succinyl-CoA synthetase functions in the citric acid cycle (TCA), coupling the hydrolysis of succinyl-CoA to the synthesis of either ATP or GTP and thus represents the only step of substrate-level phosphorylation in the TCA. The beta subunit provides nucleotide specificity of the enzyme and binds the substrate succinate, while the binding sites for coenzyme A and phosphate are found in the alpha subunit. In Bacillus mycoides (strain KBAB4) (Bacillus weihenstephanensis), this protein is Succinate--CoA ligase [ADP-forming] subunit beta.